We begin with the raw amino-acid sequence, 163 residues long: Phosphopantetheine adenylyltransferase (163 aa).

Thr11 contributes to the substrate binding site. Residues 11–12 (TF) and His19 each bind ATP. The substrate site is built by Lys43, Leu75, and Arg89. ATP-binding positions include 90 to 92 (GLR), Glu100, and 125 to 131 (YSFISST).

It belongs to the bacterial CoaD family. Homohexamer. It depends on Mg(2+) as a cofactor.

It localises to the cytoplasm. It catalyses the reaction (R)-4'-phosphopantetheine + ATP + H(+) = 3'-dephospho-CoA + diphosphate. It functions in the pathway cofactor biosynthesis; coenzyme A biosynthesis; CoA from (R)-pantothenate: step 4/5. Reversibly transfers an adenylyl group from ATP to 4'-phosphopantetheine, yielding dephospho-CoA (dPCoA) and pyrophosphate. In Acinetobacter baumannii (strain SDF), this protein is Phosphopantetheine adenylyltransferase.